A 215-amino-acid polypeptide reads, in one-letter code: MADS-box transcription factor 4 (215 aa).

The MADS-box domain maps to 1 to 61 (MGRGKIEIKR…GKLSDYCTPK (61 aa)). The K-box domain occupies 89–175 (HKSLSAEIDR…AFRVHQQEVE (87 aa)).

As to quaternary structure, may interact with the K-box of MADS16. In terms of tissue distribution, highly expressed in lodicules, at intermediate levels in stamens, and weakly in carpels. Expressed in pollen.

The protein localises to the nucleus. In terms of biological role, probable transcription factor involved in the development of floral organs. B-class protein required for normal development of lodicules and stamens (whorls 2 and 3). May function as a heterodimer with MADS16. The chain is MADS-box transcription factor 4 (MADS4) from Oryza sativa subsp. japonica (Rice).